The sequence spans 498 residues: Cyclin-L1 (498 aa).

2 cyclin-like regions span residues 68–169 and 182–266; these read ERIQ…RILK and KIIV…NTMK. The disordered stretch occupies residues 294–498; sequence LKARGQNPNG…SGHSHSRHRR (205 aa). Over residues 311-320 the composition is skewed to polar residues; it reads NGFSPASKPS. Residues 321-341 show a composition bias toward basic and acidic residues; sequence SPRDVKMDDKSPNSKLKEPEN. Residues 366 to 396 are RS; that stretch reads KNHSRSRSRSTSRSPHRHRRSHSGTYSSHSS. Basic residues predominate over residues 367-387; the sequence is NHSRSRSRSTSRSPHRHRRSH. The span at 388 to 402 shows a compositional bias: low complexity; it reads SGTYSSHSSHSPSPR. Ser-409 and Ser-412 each carry phosphoserine. Residues 415–426 are compositionally biased toward basic and acidic residues; the sequence is RTDRDRPSETSR. The span at 427 to 440 shows a compositional bias: basic residues; that stretch reads HSNKRRRSRSRSRS. Positions 441–478 are enriched in basic and acidic residues; that stretch reads NSRERVRDRDHIKHKQERSGSGHHWDHRDRERDRSRDH. Basic residues predominate over residues 479-498; that stretch reads GRNKRQSRSHSGHSHSRHRR.

The protein belongs to the cyclin family. Cyclin L subfamily.

The protein resides in the nucleus speckle. The protein localises to the nucleus. It is found in the nucleoplasm. Its function is as follows. Involved in pre-mRNA splicing. The polypeptide is Cyclin-L1 (ccnl1) (Danio rerio (Zebrafish)).